We begin with the raw amino-acid sequence, 254 residues long: MRVVYWVGTSWKMNKTLAEALDFAERLAGFIPGFDDRIQPFVIPPFTAVREVKRALSSTRIKVGAQNMHWADAGAWTGEISPPMLRDCGLDLVELGHSERREHFGETDRTVGLKTAAAVKHGMIPLICVGETLAERESGQADAVLSAQVEGALQFLEGEAKTAKILFAYEPVWAIGDKGIPASADYADKQQALIKTVAGALLPSVPPVLYGGSVNPGNAAELVGQPNIDGLFIGRSAWQADGYIDILGRASAAI.

His-97 (electrophile) is an active-site residue. Glu-170 serves as the catalytic Proton acceptor. Gly-176 and Ser-213 together coordinate substrate.

The protein belongs to the triosephosphate isomerase family. As to quaternary structure, homodimer.

Its subcellular location is the cytoplasm. The enzyme catalyses L-erythrulose 1-phosphate = D-erythrulose 4-phosphate. It functions in the pathway carbohydrate metabolism; erythritol degradation. In terms of biological role, catalyzes the isomerization of D-erythrulose-4P to L-erythrulose-1P. The sequence is that of L-erythrulose-1-phosphate isomerase from Mesorhizobium japonicum (strain LMG 29417 / CECT 9101 / MAFF 303099) (Mesorhizobium loti (strain MAFF 303099)).